The following is a 129-amino-acid chain: Transcription antitermination protein NusB (129 aa).

Belongs to the NusB family.

Its function is as follows. Involved in transcription antitermination. Required for transcription of ribosomal RNA (rRNA) genes. Binds specifically to the boxA antiterminator sequence of the ribosomal RNA (rrn) operons. The protein is Transcription antitermination protein NusB of Staphylococcus aureus (strain bovine RF122 / ET3-1).